A 307-amino-acid polypeptide reads, in one-letter code: 2-carboxy-1,4-naphthoquinone phytyltransferase (307 aa).

Helical transmembrane passes span 27-47 (MYTV…GLTG), 51-71 (GDVF…INLS), 98-118 (LVFL…MSMS), 125-145 (TVLE…GPPF), 147-167 (LGYL…LAIA), 177-197 (FSWN…IILF), 223-243 (LGSQ…AIGV), and 284-304 (FIAV…YGWA).

Belongs to the MenA family. Type 2 subfamily.

The protein localises to the cell inner membrane. It carries out the reaction 2-carboxy-1,4-naphthoquinone + phytyl diphosphate + H(+) = demethylphylloquinone + CO2 + diphosphate. It participates in cofactor biosynthesis; phylloquinone biosynthesis. Functionally, involved in the synthesis of phylloquinone (vitamin K1). Catalyzes the transfer of a prenyl chain to 2-carboxy-1,4-naphthoquinone. This Synechocystis sp. (strain ATCC 27184 / PCC 6803 / Kazusa) protein is 2-carboxy-1,4-naphthoquinone phytyltransferase.